The sequence spans 700 residues: Suprabasin (700 aa).

An N-terminal signal peptide occupies residues 1–23 (MYLVSLLSSCCLLVLLGTLPARA). Disordered stretches follow at residues 133–158 (QGGS…VANK), 183–258 (HAFG…VADK), and 283–391 (HAFG…GAHH). A coiled-coil region spans residues 488–546 (KEAEKVAHGVQNGVNQAQKEAEKVAHGVQNGVNQAQKEAEKVAHGVQNGVNQAQKEAEK). The segment covering 641–654 (GVNQPSKEANQLLN) has biased composition (polar residues). The tract at residues 641 to 669 (GVNQPSKEANQLLNGSHQGQGGYGGQHGG) is disordered. The span at 658-668 (QGQGGYGGQHG) shows a compositional bias: gly residues.

In terms of tissue distribution, detected in epidermis, in suprabasal keratinocytes. Detected in suprabasal layers of embryonic epidermis and in stratified layers of embryonic tongue and palate. Detected in adult stomach.

Its subcellular location is the secreted. The chain is Suprabasin (Sbsn) from Mus musculus (Mouse).